Consider the following 160-residue polypeptide: MRCPACNYNGTKVLDSRPVQDFGSIRRRRECESCGYRFTTFEMVEQTPLIIVKKDGTRDEFNRDKILRGLVRACEKRPISIEQLETVVSRVEKTLRATAQHEIPSEQVGRLVLNELASVDEVAYVRFASVYKQFKDINVFFQELSELMERHQDTEQENQT.

Residues 3-34 (CPACNYNGTKVLDSRPVQDFGSIRRRRECESC) fold into a zinc finger. Positions 49–139 (LIIVKKDGTR…VYKQFKDINV (91 aa)) constitute an ATP-cone domain.

Belongs to the NrdR family. Zn(2+) is required as a cofactor.

In terms of biological role, negatively regulates transcription of bacterial ribonucleotide reductase nrd genes and operons by binding to NrdR-boxes. This chain is Transcriptional repressor NrdR, found in Exiguobacterium sibiricum (strain DSM 17290 / CCUG 55495 / CIP 109462 / JCM 13490 / 255-15).